The following is a 907-amino-acid chain: Translation initiation factor IF-2 (907 aa).

Residues 26–317 (DAGMKKSSSD…KPKSMQHGFD (292 aa)) are disordered. 2 stretches are compositionally biased toward basic and acidic residues: residues 28-44 (GMKK…EKQK) and 101-248 (SAIE…DTDY). A compositionally biased stretch (basic residues) spans 299–308 (KGGRKGKLSK). Positions 406-575 (PRAPVVTIMG…LLQAEVLELT (170 aa)) constitute a tr-type G domain. The G1 stretch occupies residues 415–422 (GHVDHGKT). Residue 415–422 (GHVDHGKT) participates in GTP binding. Positions 440–444 (GITQH) are G2. The G3 stretch occupies residues 461 to 464 (DTPG). GTP-binding positions include 461-465 (DTPGH) and 515-518 (NKID). The G4 stretch occupies residues 515–518 (NKID). Residues 551–553 (SAK) are G5.

The protein belongs to the TRAFAC class translation factor GTPase superfamily. Classic translation factor GTPase family. IF-2 subfamily.

It is found in the cytoplasm. Its function is as follows. One of the essential components for the initiation of protein synthesis. Protects formylmethionyl-tRNA from spontaneous hydrolysis and promotes its binding to the 30S ribosomal subunits. Also involved in the hydrolysis of GTP during the formation of the 70S ribosomal complex. The sequence is that of Translation initiation factor IF-2 from Vibrio vulnificus (strain CMCP6).